The chain runs to 245 residues: Outer dense fiber protein 1 (245 aa).

Serine 5 and serine 10 each carry phosphoserine. Repeat unit 1 spans residues 34–38 (RCLCD). A 2 X 5 AA repeats of [RC]-C-L-C-D region spans residues 34-78 (RCLCDLYMHPYCCCDLHPYPYCLCYSKRSRSCGLCDLYYPCCLCD). Serine 64 is subject to Phosphoserine. Repeat unit 2 spans residues 74 to 78 (CCLCD). Phosphoserine occurs at positions 87, 108, 109, 137, 153, 175, and 180. Positions 195-233 (CNPCNPCSPCSPCGPCGPCGPCGPCGPCGPCDPCNPCYP) are C-X-P repeat region.

As to quaternary structure, interacts (via leucine zipper motif) with TCP11. Interacts with SPAG4. Interacts with KLC3. Interacts with CCDC42. In terms of tissue distribution, testis. Specifically located to the round spermatid layer and to the luminally-oriented cytoplasm of elongated spermatids.

The protein resides in the cell projection. Its subcellular location is the cilium. It localises to the flagellum. It is found in the cytoplasm. The protein localises to the cytoskeleton. The protein resides in the microtubule organizing center. Its subcellular location is the centrosome. In terms of biological role, component of the outer dense fibers (ODF) of spermatozoa. ODF are filamentous structures located on the outside of the axoneme in the midpiece and principal piece of the mammalian sperm tail and may help to maintain the passive elastic structures and elastic recoil of the sperm tail. This chain is Outer dense fiber protein 1 (Odf1), found in Rattus norvegicus (Rat).